The chain runs to 130 residues: Anti-adapter protein IraD (130 aa).

Belongs to the GpW/Gp25 family. IraD subfamily. Interacts with RssB.

It is found in the cytoplasm. In terms of biological role, inhibits RpoS proteolysis by regulating RssB activity, thereby increasing the stability of the sigma stress factor RpoS during oxidative stress. Its effect on RpoS stability is due to its interaction with RssB, which probably blocks the interaction of RssB with RpoS, and the consequent delivery of the RssB-RpoS complex to the ClpXP protein degradation pathway. The chain is Anti-adapter protein IraD from Shigella boydii serotype 4 (strain Sb227).